A 492-amino-acid polypeptide reads, in one-letter code: Glutamyl-tRNA(Gln) amidotransferase subunit A (492 aa).

Residues Lys-78 and Ser-158 each act as charge relay system in the active site. The active-site Acyl-ester intermediate is Ser-182.

This sequence belongs to the amidase family. GatA subfamily. As to quaternary structure, heterotrimer of A, B and C subunits.

The enzyme catalyses L-glutamyl-tRNA(Gln) + L-glutamine + ATP + H2O = L-glutaminyl-tRNA(Gln) + L-glutamate + ADP + phosphate + H(+). Functionally, allows the formation of correctly charged Gln-tRNA(Gln) through the transamidation of misacylated Glu-tRNA(Gln) in organisms which lack glutaminyl-tRNA synthetase. The reaction takes place in the presence of glutamine and ATP through an activated gamma-phospho-Glu-tRNA(Gln). The polypeptide is Glutamyl-tRNA(Gln) amidotransferase subunit A (Zymomonas mobilis subsp. mobilis (strain ATCC 31821 / ZM4 / CP4)).